Consider the following 227-residue polypeptide: NADH-quinone oxidoreductase subunit C (227 aa).

The protein belongs to the complex I 30 kDa subunit family. NDH-1 is composed of 14 different subunits. Subunits NuoB, C, D, E, F, and G constitute the peripheral sector of the complex.

It localises to the cell inner membrane. It catalyses the reaction a quinone + NADH + 5 H(+)(in) = a quinol + NAD(+) + 4 H(+)(out). NDH-1 shuttles electrons from NADH, via FMN and iron-sulfur (Fe-S) centers, to quinones in the respiratory chain. The immediate electron acceptor for the enzyme in this species is believed to be ubiquinone. Couples the redox reaction to proton translocation (for every two electrons transferred, four hydrogen ions are translocated across the cytoplasmic membrane), and thus conserves the redox energy in a proton gradient. This is NADH-quinone oxidoreductase subunit C from Legionella pneumophila (strain Lens).